A 189-amino-acid chain; its full sequence is ATP-dependent protease subunit HslV (189 aa).

The active site involves T12. 3 residues coordinate Na(+): A172, C175, and T178.

It belongs to the peptidase T1B family. HslV subfamily. A double ring-shaped homohexamer of HslV is capped on each side by a ring-shaped HslU homohexamer. The assembly of the HslU/HslV complex is dependent on binding of ATP.

It localises to the cytoplasm. It catalyses the reaction ATP-dependent cleavage of peptide bonds with broad specificity.. With respect to regulation, allosterically activated by HslU binding. Functionally, protease subunit of a proteasome-like degradation complex believed to be a general protein degrading machinery. The polypeptide is ATP-dependent protease subunit HslV (Ehrlichia ruminantium (strain Welgevonden)).